The chain runs to 178 residues: ATP-dependent protease subunit HslV (178 aa).

Residue threonine 2 is part of the active site. Na(+) is bound by residues glycine 157, cysteine 160, and threonine 163.

This sequence belongs to the peptidase T1B family. HslV subfamily. As to quaternary structure, a double ring-shaped homohexamer of HslV is capped on each side by a ring-shaped HslU homohexamer. The assembly of the HslU/HslV complex is dependent on binding of ATP.

The protein resides in the cytoplasm. It carries out the reaction ATP-dependent cleavage of peptide bonds with broad specificity.. Allosterically activated by HslU binding. Its function is as follows. Protease subunit of a proteasome-like degradation complex believed to be a general protein degrading machinery. The polypeptide is ATP-dependent protease subunit HslV (Hamiltonella defensa subsp. Acyrthosiphon pisum (strain 5AT)).